The sequence spans 500 residues: Cytochrome P450 2C11 (500 aa).

Residue Cys435 coordinates heme.

The protein belongs to the cytochrome P450 family. Heme is required as a cofactor. In terms of tissue distribution, liver and kidney; male-specific.

It is found in the endoplasmic reticulum membrane. Its subcellular location is the microsome membrane. It catalyses the reaction an organic molecule + reduced [NADPH--hemoprotein reductase] + O2 = an alcohol + oxidized [NADPH--hemoprotein reductase] + H2O + H(+). The enzyme catalyses testosterone + reduced [NADPH--hemoprotein reductase] + O2 = 2alpha,17beta-dihydroxyandrost-4-en-3-one + oxidized [NADPH--hemoprotein reductase] + H2O + H(+). The catalysed reaction is testosterone + reduced [NADPH--hemoprotein reductase] + O2 = 16alpha,17beta-dihydroxyandrost-4-en-3-one + oxidized [NADPH--hemoprotein reductase] + H2O + H(+). It carries out the reaction (5Z,8Z,11Z,14Z)-eicosatetraenoate + reduced [NADPH--hemoprotein reductase] + O2 = (8R,9S)-epoxy-(5Z,11Z,14Z)-eicosatrienoate + oxidized [NADPH--hemoprotein reductase] + H2O + H(+). It catalyses the reaction (5Z,8Z,11Z,14Z)-eicosatetraenoate + reduced [NADPH--hemoprotein reductase] + O2 = (8S,9R)-epoxy-(5Z,11Z,14Z)-eicosatrienoate + oxidized [NADPH--hemoprotein reductase] + H2O + H(+). The enzyme catalyses (5Z,8Z,11Z,14Z)-eicosatetraenoate + reduced [NADPH--hemoprotein reductase] + O2 = (11R,12S)-epoxy-(5Z,8Z,14Z)-eicosatrienoate + oxidized [NADPH--hemoprotein reductase] + H2O + H(+). The catalysed reaction is (5Z,8Z,11Z,14Z)-eicosatetraenoate + reduced [NADPH--hemoprotein reductase] + O2 = (11S,12R)-epoxy-(5Z,8Z,14Z)-eicosatrienoate + oxidized [NADPH--hemoprotein reductase] + H2O + H(+). It carries out the reaction (5Z,8Z,11Z,14Z)-eicosatetraenoate + reduced [NADPH--hemoprotein reductase] + O2 = (14R,15S)-epoxy-(5Z,8Z,11Z)-eicosatrienoate + oxidized [NADPH--hemoprotein reductase] + H2O + H(+). It catalyses the reaction (5Z,8Z,11Z,14Z)-eicosatetraenoate + reduced [NADPH--hemoprotein reductase] + O2 = (14S,15R)-epoxy-(5Z,8Z,11Z)-eicosatrienoate + oxidized [NADPH--hemoprotein reductase] + H2O + H(+). The enzyme catalyses (5Z,8Z,11Z,14Z,17Z)-eicosapentaenoate + reduced [NADPH--hemoprotein reductase] + O2 = 8,9-epoxy-(5Z,11Z,14Z,17Z)-eicosatetraenoate + oxidized [NADPH--hemoprotein reductase] + H2O + H(+). The catalysed reaction is (5Z,8Z,11Z,14Z,17Z)-eicosapentaenoate + reduced [NADPH--hemoprotein reductase] + O2 = 11,12-epoxy-(5Z,8Z,14Z,17Z)-eicosatetraenoate + oxidized [NADPH--hemoprotein reductase] + H2O + H(+). It carries out the reaction (5Z,8Z,11Z,14Z,17Z)-eicosapentaenoate + reduced [NADPH--hemoprotein reductase] + O2 = 14,15-epoxy-(5Z,8Z,11Z,17Z)-eicosatetraenoate + oxidized [NADPH--hemoprotein reductase] + H2O + H(+). It catalyses the reaction (5Z,8Z,11Z,14Z,17Z)-eicosapentaenoate + reduced [NADPH--hemoprotein reductase] + O2 = (17S,18R)-epoxy-(5Z,8Z,11Z,14Z)-eicosatetraenoate + oxidized [NADPH--hemoprotein reductase] + H2O + H(+). The enzyme catalyses (5Z,8Z,11Z,14Z,17Z)-eicosapentaenoate + reduced [NADPH--hemoprotein reductase] + O2 = (17R,18S)-epoxy-(5Z,8Z,11Z,14Z)-eicosatetraenoate + oxidized [NADPH--hemoprotein reductase] + H2O + H(+). The protein operates within lipid metabolism; arachidonate metabolism. It functions in the pathway steroid metabolism. Its function is as follows. A cytochrome P450 monooxygenase involved in the metabolism of steroid hormones and fatty acids. Catalyzes the hydroxylation of carbon-hydrogen bonds. Metabolizes testosterone to 2alpha- and 16alpha-hydroxytestosterone. Catalyzes the epoxidation of double bonds of polyunsaturated fatty acids (PUFAs). Converts arachidonic acid (ARA, C20:4(n-6)) primarily to epoxyeicosatrienoic acid (EET) regioisomers, 8,9-, 11,12-, and 14,15-EET, with both R,S and S,R stereochemistry. Preferentially produces 11R,12S-EET enantiomer. To a lesser extent, catalyzes the hydroxylation of arachidonic acid producing hydroxyeicosatetraenoates (HETEs). Metabolizes eicosapentaenoic acid (EPA, C20:5(n-3)) to epoxyeicosatetraenoic acid (EETeTr) regioisomers, 8,9-, 11,12-, 14,15-, and 17,18-EETeTr, preferentially producing 17R,18S-EETeTr enantiomer. Mechanistically, uses molecular oxygen inserting one oxygen atom into a substrate, and reducing the second into a water molecule, with two electrons provided by NADPH via cytochrome P450 reductase (NADPH--hemoprotein reductase). The protein is Cytochrome P450 2C11 (Cyp2c11) of Rattus norvegicus (Rat).